A 344-amino-acid polypeptide reads, in one-letter code: tRNA N6-adenosine threonylcarbamoyltransferase (344 aa).

Fe cation is bound by residues His-110 and His-114. Substrate contacts are provided by residues 133–137 (VVSGA), Asp-166, Gly-179, and Asn-278. Asp-303 contacts Fe cation.

The protein belongs to the KAE1 / TsaD family. Requires Fe(2+) as cofactor.

It is found in the cytoplasm. The catalysed reaction is L-threonylcarbamoyladenylate + adenosine(37) in tRNA = N(6)-L-threonylcarbamoyladenosine(37) in tRNA + AMP + H(+). In terms of biological role, required for the formation of a threonylcarbamoyl group on adenosine at position 37 (t(6)A37) in tRNAs that read codons beginning with adenine. Is involved in the transfer of the threonylcarbamoyl moiety of threonylcarbamoyl-AMP (TC-AMP) to the N6 group of A37, together with TsaE and TsaB. TsaD likely plays a direct catalytic role in this reaction. The sequence is that of tRNA N6-adenosine threonylcarbamoyltransferase from Chlamydia abortus (strain DSM 27085 / S26/3) (Chlamydophila abortus).